A 410-amino-acid chain; its full sequence is Transcription termination factor, mitochondrial (410 aa).

A mitochondrion-targeting transit peptide spans 1 to 44; the sequence is MIRSLLRSFETALKLHAGLNMHPMHCSRRLLFSQYENRASPSRL.

It belongs to the mTERF family.

The protein localises to the mitochondrion. Functionally, transcription termination factor. Binds promoter DNA and regulates mitochondrial replication and transcription. Transcription termination activity may be polarized with highest termination activity occurring when its DNA-binding site is positioned in the reverse orientation with respect to the incoming RNA polymerase. Required for normal topology and maintenance of mitochondrial DNA (mtDNA) levels. Regulates mtDNA replication by promoting replication pausing, possibly by acting as a natural barrier to replication fork progression. Its function in replication pausing prevents unregulated replication that may occur for example by collisions between the machineries of DNA replication and transcription during mtDNA synthesis. This ensures the incorporation of RNA transcripts into replication intermediates at the replication fork and allow for proper fork progression. Shares mtDNA binding sites with the mitochondrial termination factor mTerf5 and thereby may antagonize mTerf5 function during replication to regulate pausing. Likely to function downstream of Dref which activates genes involved in mtDNA replication and maintenance. The sequence is that of Transcription termination factor, mitochondrial from Drosophila melanogaster (Fruit fly).